The chain runs to 910 residues: Seizure 6-like protein 2 (910 aa).

Positions 1 to 27 (MGTPKAQHPPPSQLLLLILLSCAWIEG) are cleaved as a signal peptide. The Extracellular portion of the chain corresponds to 28–844 (LPLKEDEMMP…DPSRQLEGGN (817 aa)). A disordered region spans residues 70–152 (PGSDPDPTLA…PLRPEGGEEE (83 aa)). Over residues 123 to 145 (LTPPPGTTAPPPPGPASPVPPLR) the composition is skewed to pro residues. A disulfide bridge connects residues Cys-173 and Cys-202. The 114-residue stretch at 173–286 (CNNNISEGEG…NGFRIHYQAY (114 aa)) folds into the CUB 1 domain. An N-linked (GlcNAc...) asparagine glycan is attached at Asn-222. The Sushi 1 domain occupies 288-347 (LSCGFPPRPAHGDVSVTDLHPGGTATFHCDSGYQLQGEETLICLNGTRPAWTGEPPSCTA). Intrachain disulfides connect Cys-290/Cys-330, Cys-316/Cys-345, Cys-349/Cys-376, Cys-464/Cys-508, Cys-491/Cys-523, Cys-527/Cys-553, Cys-644/Cys-686, Cys-672/Cys-699, Cys-705/Cys-747, Cys-733/Cys-764, Cys-771/Cys-813, and Cys-799/Cys-828. N-linked (GlcNAc...) asparagine glycosylation is found at Asn-332, Asn-373, Asn-473, and Asn-517. Positions 349-459 (CGGTIHNATL…LLLSLRFEAF (111 aa)) constitute a CUB 2 domain. The Sushi 2 domain occupies 462-525 (DRCFPPFLAH…WNDTEPACKA (64 aa)). The CUB 3 domain occupies 527–638 (CGGELSEPAG…QGFVLHFKEV (112 aa)). Sushi domains lie at 642-701 (DTCP…ACQK), 703-766 (MTCA…KCAL), and 769-830 (EPCL…LCKV). A helical membrane pass occupies residues 845–865 (LALAILLPLGLVIVLGIGVYI). Residues 866-910 (YYTKLQGKSLFGFSGSHSYSPITVESDFSNPLYEAGDTREYEVSI) lie on the Cytoplasmic side of the membrane.

The protein belongs to the SEZ6 family. As to expression, expressed exclusively in the brain, predominantly in the neurons. Wide expression in the gray matter of the brain with high levels in the olfactory bulb, anterior olfactory nuclei, hippocampal formation and cerebellar cortex. Detected diffusely and weakly in the white matter, such as the corpus callosum and cerebellar medulla. In the cerebellar cortex, intensely expressed in Purkinje cells (PC) and granule cells. Detected also in interneurons in the molecular layer. Up-regulated at two weeks after birth.

The protein resides in the cell membrane. Its subcellular location is the endoplasmic reticulum membrane. Its function is as follows. May contribute to specialized endoplasmic reticulum functions in neurons. The sequence is that of Seizure 6-like protein 2 (Sez6l2) from Mus musculus (Mouse).